The sequence spans 541 residues: CTP synthase (541 aa).

An amidoligase domain region spans residues 1–271 (MVGKLNPTRF…DTQILKHFDV (271 aa)). CTP is bound at residue Ser-19. Ser-19 contacts UTP. ATP contacts are provided by residues 20–25 (SLGKGL) and Asp-77. Positions 77 and 145 each coordinate Mg(2+). CTP contacts are provided by residues 152–154 (DIE), 192–197 (KTKPTQ), and Lys-228. UTP is bound by residues 192–197 (KTKPTQ) and Lys-228. The region spanning 296 to 537 (VIAIVGKYVT…VTSTLQVKKA (242 aa)) is the Glutamine amidotransferase type-1 domain. Gly-355 lines the L-glutamine pocket. Cys-382 serves as the catalytic Nucleophile; for glutamine hydrolysis. L-glutamine contacts are provided by residues 383–386 (LGMQ), Glu-406, and Arg-465. Residues His-510 and Glu-512 contribute to the active site.

This sequence belongs to the CTP synthase family. In terms of assembly, homotetramer.

The enzyme catalyses UTP + L-glutamine + ATP + H2O = CTP + L-glutamate + ADP + phosphate + 2 H(+). It catalyses the reaction L-glutamine + H2O = L-glutamate + NH4(+). The catalysed reaction is UTP + NH4(+) + ATP = CTP + ADP + phosphate + 2 H(+). It functions in the pathway pyrimidine metabolism; CTP biosynthesis via de novo pathway; CTP from UDP: step 2/2. Allosterically activated by GTP, when glutamine is the substrate; GTP has no effect on the reaction when ammonia is the substrate. The allosteric effector GTP functions by stabilizing the protein conformation that binds the tetrahedral intermediate(s) formed during glutamine hydrolysis. Inhibited by the product CTP, via allosteric rather than competitive inhibition. In terms of biological role, catalyzes the ATP-dependent amination of UTP to CTP with either L-glutamine or ammonia as the source of nitrogen. Regulates intracellular CTP levels through interactions with the four ribonucleotide triphosphates. The sequence is that of CTP synthase from Anaplasma phagocytophilum (strain HZ).